A 102-amino-acid polypeptide reads, in one-letter code: Small ribosomal subunit protein uS10 (102 aa).

It belongs to the universal ribosomal protein uS10 family. In terms of assembly, part of the 30S ribosomal subunit.

Its function is as follows. Involved in the binding of tRNA to the ribosomes. The polypeptide is Small ribosomal subunit protein uS10 (Clostridium kluyveri (strain NBRC 12016)).